A 473-amino-acid chain; its full sequence is ATP synthase subunit beta 2 (473 aa).

158 to 165 (GGAGVGKT) lines the ATP pocket.

The protein belongs to the ATPase alpha/beta chains family. In terms of assembly, F-type ATPases have 2 components, CF(1) - the catalytic core - and CF(0) - the membrane proton channel. CF(1) has five subunits: alpha(3), beta(3), gamma(1), delta(1), epsilon(1). CF(0) has three main subunits: a(1), b(2) and c(9-12). The alpha and beta chains form an alternating ring which encloses part of the gamma chain. CF(1) is attached to CF(0) by a central stalk formed by the gamma and epsilon chains, while a peripheral stalk is formed by the delta and b chains.

It is found in the cell membrane. It catalyses the reaction ATP + H2O + 4 H(+)(in) = ADP + phosphate + 5 H(+)(out). Functionally, produces ATP from ADP in the presence of a proton gradient across the membrane. The catalytic sites are hosted primarily by the beta subunits. The protein is ATP synthase subunit beta 2 of Listeria welshimeri serovar 6b (strain ATCC 35897 / DSM 20650 / CCUG 15529 / CIP 8149 / NCTC 11857 / SLCC 5334 / V8).